The sequence spans 815 residues: Kinesin heavy chain (815 aa).

In terms of domain architecture, Kinesin motor spans 11–329 (GVQVFCRIRP…LLFGARAKTI (319 aa)). ATP is bound at residue 88-95 (GQTSSGKT). Coiled coils occupy residues 335 to 374 (INEE…RWRA), 422 to 554 (PITD…LDEC), and 695 to 785 (PAQK…RMNA). The segment at 788-815 (IVKPIRPGQVYTSPSAGMSQGAPNGSNA) is disordered. Over residues 797–815 (VYTSPSAGMSQGAPNGSNA) the composition is skewed to polar residues.

It belongs to the TRAFAC class myosin-kinesin ATPase superfamily. Kinesin family. Kinesin subfamily. As to quaternary structure, oligomer composed of two heavy chains and two light chains.

Its subcellular location is the cytoplasm. It is found in the cytoskeleton. Functionally, microtubule-dependent motor protein required for organelle transport. Plays a role in endosome transport. Required for the transport of mitochondria along the axon of motor neurons. Involved in the nuclear migration of hyp7 hypodermal precursor cells. Required for the formation of dendritic branches of PVD sensory neurons. In non-ciliated neurons such as the PVD and PHC neurons, required for the organization of minus-end out microtubules in dendrites. Also required for the minus-end out orientation of microtubules in dendrites of AQR gas-sensing neurons. Involved in the localization of unc-33 to neurites. Positively regulates cilium position and dendrite morphogenesis in the postembryonic AQR and PQR gas-sensing neurons. Plays a more prominent role in regulating dendrite morphogenesis in AQR than in PQR neurons. Plays a role in regulating the localization of grdn-1 to the distal dendrites of AQR sensory neurons. The polypeptide is Kinesin heavy chain (Caenorhabditis elegans).